We begin with the raw amino-acid sequence, 578 residues long: Octopamine receptor 2 (578 aa).

Residues 1-84 lie on the Extracellular side of the membrane; the sequence is MMSFPIALFA…YDSITIFITV (84 aa). N-linked (GlcNAc...) asparagine glycans are attached at residues Asn13, Asn38, Asn46, and Asn59. Residues 85-107 traverse the membrane as a helical segment; the sequence is AVVLTLITLWTILGNFFVLMALY. Residues 108–117 lie on the Cytoplasmic side of the membrane; sequence RYGTLRTMSN. Residues 118–139 traverse the membrane as a helical segment; that stretch reads CLIGNLAISDLLLAVTVLPIST. The Extracellular portion of the chain corresponds to 140–156; that stretch reads VHDLLGYWVFGEFTCTL. Cys154 and Cys239 are joined by a disulfide. Residues 157 to 177 form a helical membrane-spanning segment; the sequence is WLCMDVLYCTASIWGLCTVAF. At 178–197 the chain is on the cytoplasmic side; that stretch reads DRYLATVYPVWYHDQRSVRK. A helical membrane pass occupies residues 198-220; that stretch reads AVGCIVFVWIFSIVISFAPFIGW. Over 221–251 the chain is Extracellular; it reads QHMIPSFFSFNASIQRYQCILFTSSSYVLYS. N-linked (GlcNAc...) asparagine glycosylation is present at Asn231. The helical transmembrane segment at 252–272 threads the bilayer; it reads SMGSFVIPAILMAFMYVRIFV. Over 273 to 495 the chain is Cytoplasmic; sequence VLHNQSRGVK…ELREQRATKR (223 aa). A helical membrane pass occupies residues 496–517; that stretch reads MLLIMACFCVCWMPFLFMYILR. Residues 518–531 are Extracellular-facing; it reads SVCDTCHMNQHFVA. A helical transmembrane segment spans residues 532-553; it reads AIIWLGYVNSSLNPVLYTLFND. The Cytoplasmic segment spans residues 554 to 578; the sequence is DFKVAFKRLIGARSPSAYRSPGPRR.

It belongs to the G-protein coupled receptor 1 family.

It localises to the cell membrane. In terms of biological role, receptor for octopamine. Octopamine (OA) is a neurotransmitter, neurohormone, and neuromodulator in invertebrates. This receptor induces a long lasting opening of voltage- independent chloride channels, a process which seems to involve protein phosphorylation but does not require either cAPK or PKC. The rank order of potency for agonists is p-synephrine &gt; p-octopamine &gt; xylometazoline &gt; B-HT920 &gt; norepinephrine = clonidine &gt; epinephrine &gt; p-tyramine &gt; phenylephrine = oxymetazoline = mehoxamine = dopamine &gt; serotonin &gt; histamine. For antagonists, the rank order is rauwolscine = mianserin &gt; phentolamine &gt; chlorpromazine &gt; spiperone &gt; yohimbine &gt; propanolol &gt; alprenolol &gt; prazosine &gt; pindolol. The chain is Octopamine receptor 2 from Lymnaea stagnalis (Great pond snail).